The primary structure comprises 101 residues: Small ribosomal subunit protein bS6 (101 aa).

The protein belongs to the bacterial ribosomal protein bS6 family.

Functionally, binds together with bS18 to 16S ribosomal RNA. The sequence is that of Small ribosomal subunit protein bS6 from Nitratidesulfovibrio vulgaris (strain ATCC 29579 / DSM 644 / CCUG 34227 / NCIMB 8303 / VKM B-1760 / Hildenborough) (Desulfovibrio vulgaris).